A 537-amino-acid polypeptide reads, in one-letter code: Phosphoenolpyruvate carboxykinase (ATP) (537 aa).

The substrate site is built by Arg-61, Tyr-195, and Lys-201. ATP-binding positions include Lys-201, His-220, and 236–244 (GLSGTGKTT). Residues Lys-201 and His-220 each contribute to the Mn(2+) site. Asp-257 contributes to the Mn(2+) binding site. Positions 285, 323, and 448 each coordinate ATP. Substrate is bound at residue Arg-323.

This sequence belongs to the phosphoenolpyruvate carboxykinase (ATP) family. Mn(2+) is required as a cofactor.

The protein resides in the cytoplasm. The catalysed reaction is oxaloacetate + ATP = phosphoenolpyruvate + ADP + CO2. The protein operates within carbohydrate biosynthesis; gluconeogenesis. In terms of biological role, involved in the gluconeogenesis. Catalyzes the conversion of oxaloacetate (OAA) to phosphoenolpyruvate (PEP) through direct phosphoryl transfer between the nucleoside triphosphate and OAA. The chain is Phosphoenolpyruvate carboxykinase (ATP) from Rhodopseudomonas palustris (strain HaA2).